The sequence spans 212 residues: Probable NADH dehydrogenase [ubiquinone] iron-sulfur protein 8, mitochondrial (212 aa).

2 4Fe-4S ferredoxin-type domains span residues 104-133 (RRYP…IEAE) and 143-172 (TRYD…EGPN). [4Fe-4S] cluster contacts are provided by Cys113, Cys116, Cys119, Cys123, Cys152, Cys155, Cys158, and Cys162.

Belongs to the complex I 23 kDa subunit family. As to quaternary structure, complex I is composed of 45 different subunits This is a component of the iron-sulfur (IP) fragment of the enzyme. It depends on [4Fe-4S] cluster as a cofactor.

It localises to the mitochondrion. It carries out the reaction a ubiquinone + NADH + 5 H(+)(in) = a ubiquinol + NAD(+) + 4 H(+)(out). Its function is as follows. Core subunit of the mitochondrial membrane respiratory chain NADH dehydrogenase (Complex I) that is believed to belong to the minimal assembly required for catalysis. Complex I functions in the transfer of electrons from NADH to the respiratory chain. The immediate electron acceptor for the enzyme is believed to be ubiquinone. The chain is Probable NADH dehydrogenase [ubiquinone] iron-sulfur protein 8, mitochondrial from Caenorhabditis elegans.